The primary structure comprises 119 residues: Large ribosomal subunit protein bL20c (119 aa).

The protein belongs to the bacterial ribosomal protein bL20 family.

The protein resides in the plastid. It localises to the chloroplast. Its function is as follows. Binds directly to 23S ribosomal RNA and is necessary for the in vitro assembly process of the 50S ribosomal subunit. It is not involved in the protein synthesizing functions of that subunit. The polypeptide is Large ribosomal subunit protein bL20c (Lolium perenne (Perennial ryegrass)).